We begin with the raw amino-acid sequence, 177 residues long: UPF0316 protein STH2077 (177 aa).

Transmembrane regions (helical) follow at residues 9 to 29 (AALDLLIIFLAQATYVSVNTV) and 41 to 61 (LASAISFFEVILWVYALGLVV).

Belongs to the UPF0316 family.

The protein resides in the cell membrane. The polypeptide is UPF0316 protein STH2077 (Symbiobacterium thermophilum (strain DSM 24528 / JCM 14929 / IAM 14863 / T)).